We begin with the raw amino-acid sequence, 517 residues long: Glutamate--tRNA ligase (517 aa).

Positions 10-20 (PSPSGFLHVGG) match the 'HIGH' region motif. Zn(2+) is bound by residues cysteine 107, cysteine 109, cysteine 134, and aspartate 136. A 'KMSKS' region motif is present at residues 250 to 254 (KLSKR). Lysine 253 contacts ATP.

Belongs to the class-I aminoacyl-tRNA synthetase family. Glutamate--tRNA ligase type 1 subfamily. In terms of assembly, monomer. It depends on Zn(2+) as a cofactor.

The protein localises to the cytoplasm. The enzyme catalyses tRNA(Glu) + L-glutamate + ATP = L-glutamyl-tRNA(Glu) + AMP + diphosphate. In terms of biological role, catalyzes the attachment of glutamate to tRNA(Glu) in a two-step reaction: glutamate is first activated by ATP to form Glu-AMP and then transferred to the acceptor end of tRNA(Glu). The protein is Glutamate--tRNA ligase of Leptospira biflexa serovar Patoc (strain Patoc 1 / ATCC 23582 / Paris).